Here is a 130-residue protein sequence, read N- to C-terminus: Small ribosomal subunit protein uS9 (130 aa).

Residues 109–130 are disordered; the sequence is RMKERRKYGLKKARKAPQFSKR. The segment covering 111–130 has biased composition (basic residues); sequence KERRKYGLKKARKAPQFSKR.

Belongs to the universal ribosomal protein uS9 family.

The polypeptide is Small ribosomal subunit protein uS9 (Caldanaerobacter subterraneus subsp. tengcongensis (strain DSM 15242 / JCM 11007 / NBRC 100824 / MB4) (Thermoanaerobacter tengcongensis)).